The sequence spans 307 residues: Porphobilinogen deaminase (307 aa).

An S-(dipyrrolylmethanemethyl)cysteine modification is found at Cys-241.

This sequence belongs to the HMBS family. Monomer. Requires dipyrromethane as cofactor.

It catalyses the reaction 4 porphobilinogen + H2O = hydroxymethylbilane + 4 NH4(+). It functions in the pathway porphyrin-containing compound metabolism; protoporphyrin-IX biosynthesis; coproporphyrinogen-III from 5-aminolevulinate: step 2/4. Tetrapolymerization of the monopyrrole PBG into the hydroxymethylbilane pre-uroporphyrinogen in several discrete steps. The protein is Porphobilinogen deaminase of Coxiella burnetii (strain CbuK_Q154) (Coxiella burnetii (strain Q154)).